Reading from the N-terminus, the 149-residue chain is Calmodulin-6 (149 aa).

4 consecutive EF-hand domains span residues D8–N43, P44–D79, D81–K116, and L117–K149. Ca(2+) is bound by residues D21, D23, D25, C27, E32, D57, D59, N61, T63, E68, D94, D96, N98, E105, D130, D132, D134, Q136, and E141.

It belongs to the calmodulin family. In terms of assembly, interacts with KCBP.

Functionally, calmodulin mediates the control of a large number of enzymes, ion channels and other proteins by Ca(2+). Among the enzymes to be stimulated by the calmodulin-Ca(2+) complex are a number of protein kinases and phosphatases. The sequence is that of Calmodulin-6 (CAM6) from Arabidopsis thaliana (Mouse-ear cress).